The primary structure comprises 438 residues: UPF0229 protein Smed_1028 (438 aa).

A disordered region spans residues 55–107 (PARGVNEPAFQPDSNSGERRHVLPGNREFAAGDRIPKRGGGGGAGNAGAGTGQ). Gly residues predominate over residues 92 to 105 (RGGGGGAGNAGAGT).

It belongs to the UPF0229 family.

This chain is UPF0229 protein Smed_1028, found in Sinorhizobium medicae (strain WSM419) (Ensifer medicae).